A 546-amino-acid polypeptide reads, in one-letter code: MAWLETFTYICGWLILSSCLLVRAQLDSDGTITIEEQIVLVMKAKMQCELNITAQLQEGEGNCFPEWDGIICWPRGTVGKMSAVPCPPYVYDFNHKGVAFRHCTPNGTWDSIHGSNKTWANYSDCFLQPDINIGKQEFFESLYILYTVGYSISFGSLAVAILIIGYFRRLHCTRNYIHLHLFVSFMLRAMSIFVKDRVAQAHLGVEALQSLVMQGDLQNFIGGPSVDKSQYVGCKIAVVMFIYFLATNYYWILVEGLYLHNLIFVSFFSDTKYLWGFISIGWGFPAVFVVAWAVARATLADTRCWELSAGDRWIYQAPILAAIGLNFILFLNTVRVLATKIWETNAVGHDMRKQYRKLAKSTLVLVLVFGVHYIVFVCQPHSFSGLWWEIRMHCELFFNSFQGFFVSIVYCYCNGEVQAEVKKMWTRWNLSIDWKRAPPCGGQRYGSVLTTVTHSTSSQSQMGASTRLVLISGKPTKNACRQIDSHVTLPGYVWSSSEQDCQTHSPPEETKEGHRRQGDDSPVMESSRPVAFTLDTEGCKGETHPI.

The signal sequence occupies residues 1–24 (MAWLETFTYICGWLILSSCLLVRA). Over 27-143 (DSDGTITIEE…GKQEFFESLY (117 aa)) the chain is Extracellular. N-linked (GlcNAc...) asparagine glycosylation is found at Asn51, Asn106, Asn116, and Asn121. Residues 144–167 (ILYTVGYSISFGSLAVAILIIGYF) form a helical membrane-spanning segment. Residues 168–174 (RRLHCTR) lie on the Cytoplasmic side of the membrane. A helical membrane pass occupies residues 175-194 (NYIHLHLFVSFMLRAMSIFV). Topologically, residues 195–235 (KDRVAQAHLGVEALQSLVMQGDLQNFIGGPSVDKSQYVGCK) are extracellular. The helical transmembrane segment at 236–258 (IAVVMFIYFLATNYYWILVEGLY) threads the bilayer. At 259 to 273 (LHNLIFVSFFSDTKY) the chain is on the cytoplasmic side. Residues 274–295 (LWGFISIGWGFPAVFVVAWAVA) form a helical membrane-spanning segment. The Extracellular segment spans residues 296–313 (RATLADTRCWELSAGDRW). A helical membrane pass occupies residues 314 to 334 (IYQAPILAAIGLNFILFLNTV). Topologically, residues 335 to 361 (RVLATKIWETNAVGHDMRKQYRKLAKS) are cytoplasmic. Residues 362–380 (TLVLVLVFGVHYIVFVCQP) traverse the membrane as a helical segment. Residues 381 to 391 (HSFSGLWWEIR) are Extracellular-facing. Residues 392–414 (MHCELFFNSFQGFFVSIVYCYCN) form a helical membrane-spanning segment. At 415–546 (GEVQAEVKKM…EGCKGETHPI (132 aa)) the chain is on the cytoplasmic side. Positions 497–546 (SEQDCQTHSPPEETKEGHRRQGDDSPVMESSRPVAFTLDTEGCKGETHPI) are disordered. 2 stretches are compositionally biased toward basic and acidic residues: residues 506–519 (PPEE…RQGD) and 537–546 (EGCKGETHPI).

Belongs to the G-protein coupled receptor 2 family. In terms of assembly, binds to TIPF39/TIP39.

It is found in the cell membrane. Its function is as follows. This is a specific receptor for parathyroid hormone. The activity of this receptor is mediated by G proteins which activate adenylyl cyclase. PTH2R may be responsible for PTH effects in a number of physiological systems. It may play a significant role in pancreatic function. PTH2R presence in neurons indicates that it may function as a neurotransmitter receptor. The protein is Parathyroid hormone 2 receptor (Pth2r) of Mus musculus (Mouse).